The sequence spans 330 residues: GMP reductase (330 aa).

C180 serves as the catalytic Thioimidate intermediate. 209–232 (LIADGGIRHNGDIAKSVRFGASMV) provides a ligand contact to NADP(+).

It belongs to the IMPDH/GMPR family. GuaC type 2 subfamily.

The enzyme catalyses IMP + NH4(+) + NADP(+) = GMP + NADPH + 2 H(+). Functionally, catalyzes the irreversible NADPH-dependent deamination of GMP to IMP. It functions in the conversion of nucleobase, nucleoside and nucleotide derivatives of G to A nucleotides, and in maintaining the intracellular balance of A and G nucleotides. In Lactobacillus delbrueckii subsp. bulgaricus (strain ATCC BAA-365 / Lb-18), this protein is GMP reductase.